The primary structure comprises 145 residues: Large ribosomal subunit protein uL15 (145 aa).

The interval 1–58 (MFSLLKPKGAAKRRKIVGRGPGSGLGKTSGRGQKGQKARNTSPRLGFEGGQTPLYRRL) is disordered. Residues 19 to 33 (RGPGSGLGKTSGRGQ) show a composition bias toward gly residues.

It belongs to the universal ribosomal protein uL15 family. Part of the 50S ribosomal subunit.

In terms of biological role, binds to the 23S rRNA. This is Large ribosomal subunit protein uL15 from Borreliella afzelii (strain PKo) (Borrelia afzelii).